We begin with the raw amino-acid sequence, 656 residues long: DNA mismatch repair protein MutL (656 aa).

This sequence belongs to the DNA mismatch repair MutL/HexB family.

This protein is involved in the repair of mismatches in DNA. It is required for dam-dependent methyl-directed DNA mismatch repair. May act as a 'molecular matchmaker', a protein that promotes the formation of a stable complex between two or more DNA-binding proteins in an ATP-dependent manner without itself being part of a final effector complex. The chain is DNA mismatch repair protein MutL from Lactococcus lactis subsp. lactis (strain IL1403) (Streptococcus lactis).